The chain runs to 382 residues: MRSPLCWLLPLLILASVAQGQPTRRPRPGTGPGRRPRPRPRPTPSFPQPDEPAEPTDLPPPLPPGPPSIFPDCPRECYCPPDFPSALYCDSRNLRKVPVIPPRIHYLYLQNNFITELPVESFQNATGLRWINLDNNRIRKIDQRVLEKLPGLVFLYMEKNQLEEVPSALPRNLEQLRLSQNHISRIPPGVFSKLENLLLLDLQHNRLSDGVFKPDTFHGLKNLMQLNLAHNILRKMPPRVPTAIHQLYLDSNKIETIPNGYFKSFPNLAFIRLNYNKLTDRGLPKNSFNISNLLVLHLSHNRISSVPAINNRLEHLYLNNNSIEKINGTQICPNDLVAFHDFSSDLENVPHLRYLRLDGNYLKPPIPLDLMMCFRLLQSVVI.

The signal sequence occupies residues 1–20; it reads MRSPLCWLLPLLILASVAQG. The segment at 19-66 is disordered; that stretch reads QGQPTRRPRPGTGPGRRPRPRPRPTPSFPQPDEPAEPTDLPPPLPPGP. 2 stretches are compositionally biased toward pro residues: residues 41–50 and 57–66; these read RPTPSFPQPD and DLPPPLPPGP. LRR repeat units lie at residues 95–114, 115–138, 139–162, 163–183, 184–207, 208–233, 234–254, 255–278, 279–303, 304–323, 324–362, and 363–382; these read RKVPVIPPRIHYLYLQNNFI, TELPVESFQNATGLRWINLDNNRI, RKIDQRVLEKLPGLVFLYMEKNQL, EEVPSALPRNLEQLRLSQNHI, SRIPPGVFSKLENLLLLDLQHNRL, SDGVFKPDTFHGLKNLMQLNLAHNIL, RKMPPRVPTAIHQLYLDSNKI, ETIPNGYFKSFPNLAFIRLNYNKL, TDRGLPKNSFNISNLLVLHLSHNRI, SSVPAINNRLEHLYLNNNSI, EKINGTQICPNDLVAFHDFSSDLENVPHLRYLRLDGNYL, and KPPIPLDLMMCFRLLQSVVI. A glycan (N-linked (GlcNAc...) asparagine) is linked at asparagine 124. N-linked (GlcNAc...) asparagine glycans are attached at residues asparagine 289, asparagine 320, and asparagine 327. Cysteine 332 and cysteine 373 are disulfide-bonded.

Belongs to the small leucine-rich proteoglycan (SLRP) family. SLRP class II subfamily. As to quaternary structure, binds the basement membrane heparan sulfate proteoglycan perlecan and triple helical collagens type I and type II. In terms of processing, glycosylated; contains heparan sulfate. As to expression, connective tissue.

Its subcellular location is the secreted. It is found in the extracellular space. It localises to the extracellular matrix. Its function is as follows. May anchor basement membranes to the underlying connective tissue. In Homo sapiens (Human), this protein is Prolargin (PRELP).